We begin with the raw amino-acid sequence, 403 residues long: GPI-N-acetylgalactosamine transferase PGAP4 (403 aa).

Over 1-22 (MSTSTSPAAMLLRRLRRLSWGS) the chain is Cytoplasmic. Residues 23-43 (TAVQLFILTVVTFGLLAPLAC) form a helical membrane-spanning segment. The Lumenal segment spans residues 44–259 (HRLLHSYFYL…RLQHYINPEP (216 aa)). Asn87 carries N-linked (GalNAc...) asparagine glycosylation. Val109 lines the UDP-N-acetyl-alpha-D-galactosamine pocket. Cystine bridges form between Cys132–Cys136 and Cys144–Cys194. The short motif at 211-213 (EDD) is the DXD motif element. A helical transmembrane segment spans residues 260-280 (MRILEWVGVGMLLGPLLTWIY). The Cytoplasmic portion of the chain corresponds to 281–287 (MRFASRP). The chain crosses the membrane as a helical span at residues 288–308 (GFSWPVMLFFSLYSMGLVELV). Over 309-403 (GRHYFLELRR…LRYNFHPSLL (95 aa)) the chain is Lumenal. A disulfide bond links Cys332 and Cys333. Residues Thr334, Pro335, and Lys362 each contribute to the UDP-N-acetyl-alpha-D-galactosamine site.

This sequence belongs to the PGAP4 family. Post-translationally, glycosylated.

It is found in the golgi apparatus membrane. Golgi-resident glycosylphosphatidylinositol (GPI)-N-acetylgalactosamine transferase that catalyzes the N-acetyl-beta-D-galactosamine transfer from an UDP-N-acetyl-alpha-D-galactosamine to the 4-OH-position of the first mannose of the glycosylphosphatidylinositol (GPI) of a GPI-anchored protein (GPI-AP). This modification occurs after the fatty acid remodeling step of the GPI-anchor maturation. The protein is GPI-N-acetylgalactosamine transferase PGAP4 of Homo sapiens (Human).